The primary structure comprises 1382 residues: ABC-type transporter atr1 (1382 aa).

The segment covering 1–12 has biased composition (basic and acidic residues); the sequence is MRFRSDSRADHQ. A disordered region spans residues 1-56; the sequence is MRFRSDSRADHQHPKKQGSMDPDTIQALKYQDRSSSSSSNNKPKEKVGSASTSPSP. An N-linked (GlcNAc...) asparagine glycan is attached at Asn-62. Transmembrane regions (helical) follow at residues 101-121, 159-179, 233-253, 259-279, 339-359, and 374-394; these read LFGT…NIFI, LILL…MAVF, LPMA…AFAF, LVLL…GALT, GVGV…AFFY, and IVSV…LFSM. An ABC transmembrane type-1 1 domain is found at 101-400; sequence LFGTGMAIAA…LFSMIENFTM (300 aa). Asn-397 is a glycosylation site (N-linked (GlcNAc...) asparagine). Residues 445-688 enclose the ABC transporter 1 domain; sequence LKLDHVHFAY…PNGTFASMLR (244 aa). 480 to 487 contributes to the ATP binding site; that stretch reads GLSGSGKS. Asn-680 carries N-linked (GlcNAc...) asparagine glycosylation. A disordered region spans residues 738–768; the sequence is SVKPKDPSKNFEPPGESYASPAADGVKQDAP. An ABC transmembrane type-1 2 domain is found at 797 to 1094; that stretch reads LGSLCAAIIG…IFNYSADFSS (298 aa). Residues 800–820 form a helical membrane-spanning segment; sequence LCAAIIGAVYPVYAILFGTAI. N-linked (GlcNAc...) asparagine glycosylation occurs at Asn-827. The chain crosses the membrane as a helical span at residues 848–868; the sequence is ISSGSFFIVAVGCAFISFYHV. An N-linked (GlcNAc...) asparagine glycan is attached at Asn-903. The next 2 helical transmembrane spans lie at 911 to 931 and 951 to 973; these read SLSV…GSIV and LALV…LRVL. The N-linked (GlcNAc...) asparagine glycan is linked to Asn-1020. Helical transmembrane passes span 1034–1054 and 1067–1087; these read VLFG…FWYG and GFFT…NIFN. The ABC transporter 2 domain occupies 1136–1377; sequence IALKEVTFRY…DGLFALMARL (242 aa). 1171–1178 contacts ATP; that stretch reads GGSGSGKS. N-linked (GlcNAc...) asparagine glycosylation is present at Asn-1324.

This sequence belongs to the ABC transporter superfamily. ABCB family. Multidrug resistance exporter (TC 3.A.1.201) subfamily.

It is found in the cell membrane. Functionally, ABC-type transporter; part of the gene cluster that mediates the biosynthesis of the glycolipid biosurfactant ustilagic acid (UA). UA is a secreted cellobiose glycolipid that is toxic for many microorganisms and confers biocontrol activity to U.maydis. Export of UA is presumably catalyzed by the ABC transporter atr1. Atr1 appears to be quite unspecific, as many of the UA derivatives produced by cluster mutant strains are readily exported. This is ABC-type transporter atr1 from Mycosarcoma maydis (Corn smut fungus).